We begin with the raw amino-acid sequence, 245 residues long: Eukaryotic translation initiation factor 6-2 (245 aa).

The protein belongs to the eIF-6 family. In terms of assembly, monomer. Associates with the 60S ribosomal subunit.

The protein resides in the cytoplasm. The protein localises to the nucleus. Its subcellular location is the nucleolus. In terms of biological role, binds to the 60S ribosomal subunit and prevents its association with the 40S ribosomal subunit to form the 80S initiation complex in the cytoplasm. May also be involved in ribosome biogenesis. In Arabidopsis thaliana (Mouse-ear cress), this protein is Eukaryotic translation initiation factor 6-2.